The following is a 981-amino-acid chain: DNA ligase 4 (981 aa).

9 residues coordinate ATP: Glu-320, Lys-322, Arg-327, Glu-380, Phe-424, Glu-484, Lys-489, Lys-506, and Lys-508. The active-site N6-AMP-lysine intermediate is Lys-322. Glu-380 serves as a coordination point for Mg(2+). Residue Glu-484 participates in Mg(2+) binding. The tract at residues 544–563 (SEKNNPSSYESGSDSDSDSE) is disordered. 2 consecutive BRCT domains span residues 721–819 (SKAD…PKYV) and 875–980 (ERLL…EYAA).

The protein belongs to the ATP-dependent DNA ligase family. Mg(2+) serves as cofactor.

It localises to the nucleus. It catalyses the reaction ATP + (deoxyribonucleotide)n-3'-hydroxyl + 5'-phospho-(deoxyribonucleotide)m = (deoxyribonucleotide)n+m + AMP + diphosphate.. Its function is as follows. DNA ligase involved in DNA non-homologous end joining (NHEJ); required for double-strand break (DSB) repair. This is DNA ligase 4 (LIG4) from Eremothecium gossypii (strain ATCC 10895 / CBS 109.51 / FGSC 9923 / NRRL Y-1056) (Yeast).